Here is a 463-residue protein sequence, read N- to C-terminus: Chromosomal replication initiator protein DnaA (463 aa).

Residues 1–83 (MSTNQIILTD…LQLFQHYNNT (83 aa)) are domain I, interacts with DnaA modulators. Residues 83 to 124 (TIKSIEIITKELPGTTQTVTELPTKTFADIGSSELNSENIFS) are domain II. A domain III, AAA+ region region spans residues 125–343 (TLDARFTFDN…GALNKVIAHS (219 aa)). Positions 171, 173, 174, and 175 each coordinate ATP. The segment at 344 to 463 (NFTLKEITLE…INLLMKILQN (120 aa)) is domain IV, binds dsDNA.

Belongs to the DnaA family. As to quaternary structure, oligomerizes as a right-handed, spiral filament on DNA at oriC.

Its subcellular location is the cytoplasm. In terms of biological role, plays an essential role in the initiation and regulation of chromosomal replication. ATP-DnaA binds to the origin of replication (oriC) to initiate formation of the DNA replication initiation complex once per cell cycle. Binds the DnaA box (a 9 base pair repeat at the origin) and separates the double-stranded (ds)DNA. Forms a right-handed helical filament on oriC DNA; dsDNA binds to the exterior of the filament while single-stranded (ss)DNA is stabiized in the filament's interior. The ATP-DnaA-oriC complex binds and stabilizes one strand of the AT-rich DNA unwinding element (DUE), permitting loading of DNA polymerase. After initiation quickly degrades to an ADP-DnaA complex that is not apt for DNA replication. Binds acidic phospholipids. The sequence is that of Chromosomal replication initiator protein DnaA from Rickettsia peacockii (strain Rustic).